The chain runs to 172 residues: NADH-ubiquinone oxidoreductase chain 6 (172 aa).

Transmembrane regions (helical) follow at residues 1-21 (MAFY…AIAS), 24-44 (APYF…GILV), 53-73 (LILF…SAAL), 86-106 (VVFW…GFLL), and 140-160 (GKML…VLEV).

It belongs to the complex I subunit 6 family. In terms of assembly, core subunit of respiratory chain NADH dehydrogenase (Complex I) which is composed of 45 different subunits.

It localises to the mitochondrion inner membrane. It carries out the reaction a ubiquinone + NADH + 5 H(+)(in) = a ubiquinol + NAD(+) + 4 H(+)(out). In terms of biological role, core subunit of the mitochondrial membrane respiratory chain NADH dehydrogenase (Complex I) which catalyzes electron transfer from NADH through the respiratory chain, using ubiquinone as an electron acceptor. Essential for the catalytic activity and assembly of complex I. This chain is NADH-ubiquinone oxidoreductase chain 6 (mt-nd6), found in Danio rerio (Zebrafish).